The chain runs to 184 residues: Adenine phosphoribosyltransferase (184 aa).

It belongs to the purine/pyrimidine phosphoribosyltransferase family. Homodimer.

The protein resides in the cytoplasm. The catalysed reaction is AMP + diphosphate = 5-phospho-alpha-D-ribose 1-diphosphate + adenine. It functions in the pathway purine metabolism; AMP biosynthesis via salvage pathway; AMP from adenine: step 1/1. In terms of biological role, catalyzes a salvage reaction resulting in the formation of AMP, that is energically less costly than de novo synthesis. The chain is Adenine phosphoribosyltransferase from Acidovorax sp. (strain JS42).